Here is a 53-residue protein sequence, read N- to C-terminus: Large ribosomal subunit protein eL40 (53 aa).

This sequence belongs to the eukaryotic ribosomal protein eL40 family.

This chain is Large ribosomal subunit protein eL40, found in Pyrobaculum aerophilum (strain ATCC 51768 / DSM 7523 / JCM 9630 / CIP 104966 / NBRC 100827 / IM2).